Consider the following 261-residue polypeptide: Indole-3-glycerol phosphate synthase (261 aa).

The protein belongs to the TrpC family.

The catalysed reaction is 1-(2-carboxyphenylamino)-1-deoxy-D-ribulose 5-phosphate + H(+) = (1S,2R)-1-C-(indol-3-yl)glycerol 3-phosphate + CO2 + H2O. It functions in the pathway amino-acid biosynthesis; L-tryptophan biosynthesis; L-tryptophan from chorismate: step 4/5. This is Indole-3-glycerol phosphate synthase from Burkholderia mallei (strain NCTC 10247).